A 689-amino-acid polypeptide reads, in one-letter code: Elongation factor G (689 aa).

The region spanning 8–282 (ERTRNIGIMA…AVVDYLPAPT (275 aa)) is the tr-type G domain. Residues 17 to 24 (AHIDAGKT), 81 to 85 (DTPGH), and 135 to 138 (NKMD) contribute to the GTP site.

Belongs to the TRAFAC class translation factor GTPase superfamily. Classic translation factor GTPase family. EF-G/EF-2 subfamily.

It is found in the cytoplasm. Its function is as follows. Catalyzes the GTP-dependent ribosomal translocation step during translation elongation. During this step, the ribosome changes from the pre-translocational (PRE) to the post-translocational (POST) state as the newly formed A-site-bound peptidyl-tRNA and P-site-bound deacylated tRNA move to the P and E sites, respectively. Catalyzes the coordinated movement of the two tRNA molecules, the mRNA and conformational changes in the ribosome. The protein is Elongation factor G of Desulforudis audaxviator (strain MP104C).